A 215-amino-acid chain; its full sequence is 3,4-dihydroxy-2-butanone 4-phosphate synthase (215 aa).

D-ribulose 5-phosphate-binding positions include 38 to 39 (RE), Asp43, 151 to 155 (RRGHT), and Glu175. Glu39 serves as a coordination point for Mg(2+). His154 contributes to the Mg(2+) binding site.

The protein belongs to the DHBP synthase family. In terms of assembly, homodimer. Mg(2+) serves as cofactor. The cofactor is Mn(2+).

The catalysed reaction is D-ribulose 5-phosphate = (2S)-2-hydroxy-3-oxobutyl phosphate + formate + H(+). It participates in cofactor biosynthesis; riboflavin biosynthesis; 2-hydroxy-3-oxobutyl phosphate from D-ribulose 5-phosphate: step 1/1. Catalyzes the conversion of D-ribulose 5-phosphate to formate and 3,4-dihydroxy-2-butanone 4-phosphate. The sequence is that of 3,4-dihydroxy-2-butanone 4-phosphate synthase from Haemophilus influenzae (strain PittEE).